A 123-amino-acid chain; its full sequence is Small ribosomal subunit protein uS12 (123 aa).

Position 89 is a 3-methylthioaspartic acid (D89). The disordered stretch occupies residues 103 to 123 (DTSGVQDRRQGRSKYGAKRPK). A compositionally biased stretch (basic residues) spans 113–123 (GRSKYGAKRPK).

It belongs to the universal ribosomal protein uS12 family. In terms of assembly, part of the 30S ribosomal subunit. Contacts proteins S8 and S17. May interact with IF1 in the 30S initiation complex.

Functionally, with S4 and S5 plays an important role in translational accuracy. Its function is as follows. Interacts with and stabilizes bases of the 16S rRNA that are involved in tRNA selection in the A site and with the mRNA backbone. Located at the interface of the 30S and 50S subunits, it traverses the body of the 30S subunit contacting proteins on the other side and probably holding the rRNA structure together. The combined cluster of proteins S8, S12 and S17 appears to hold together the shoulder and platform of the 30S subunit. The protein is Small ribosomal subunit protein uS12 of Nitratidesulfovibrio vulgaris (strain ATCC 29579 / DSM 644 / CCUG 34227 / NCIMB 8303 / VKM B-1760 / Hildenborough) (Desulfovibrio vulgaris).